A 218-amino-acid polypeptide reads, in one-letter code: 3-phospho-D-glycerate guanylyltransferase (218 aa).

Belongs to the CofC family.

It catalyses the reaction (2R)-3-phosphoglycerate + GTP + H(+) = 3-[(R)-glyceryl]-diphospho-5'-guanosine + diphosphate. Its pathway is cofactor biosynthesis; coenzyme F420 biosynthesis. Functionally, guanylyltransferase that catalyzes the activation of (2R)-3-phosphoglycerate (3PG) as 3-[(R)-glyceryl]-diphospho-5'-guanosine, via the condensation of 3PG with GTP. It is involved in the biosynthesis of a derivative of the hydride carrier cofactor coenzyme F420, 3PG-F420. The chain is 3-phospho-D-glycerate guanylyltransferase from Phenylobacterium zucineum (strain HLK1).